Here is a 153-residue protein sequence, read N- to C-terminus: Nucleoside diphosphate kinase (153 aa).

ATP-binding residues include Lys13, Phe61, Arg89, Thr95, Arg106, and Asn116. A Phosphothreonine modification is found at Thr95. Catalysis depends on His119, which acts as the Pros-phosphohistidine intermediate.

This sequence belongs to the NDK family. As to quaternary structure, homohexamer and homotetramer. Interacts with TOM40 preferentially in an unfolded, unphosphorylated form. The cofactor is Mg(2+). In terms of processing, the N-terminus is blocked.

The protein localises to the cytoplasm. The protein resides in the mitochondrion intermembrane space. It carries out the reaction a 2'-deoxyribonucleoside 5'-diphosphate + ATP = a 2'-deoxyribonucleoside 5'-triphosphate + ADP. It catalyses the reaction a ribonucleoside 5'-diphosphate + ATP = a ribonucleoside 5'-triphosphate + ADP. Major role in the synthesis of nucleoside triphosphates other than ATP. The ATP gamma phosphate is transferred to the NDP beta phosphate via a ping-pong mechanism, using a phosphorylated active-site intermediate. Required for repair of UV radiation- and etoposide-induced DNA damage. The polypeptide is Nucleoside diphosphate kinase (YNK1) (Saccharomyces cerevisiae (strain ATCC 204508 / S288c) (Baker's yeast)).